We begin with the raw amino-acid sequence, 746 residues long: EF-hand domain-containing family member C2 (746 aa).

DM10 domains lie at 75–182 (DKQV…RKMG), 226–367 (DGHV…RTKY), and 429–536 (ESNT…EKHA). Residues 557–592 (PRSREIRQVFAAADPQHTKVIEYDPFRNLIVSITDG) enclose the EF-hand domain.

The protein localises to the cytoplasm. It is found in the cytoskeleton. It localises to the cilium axoneme. Functionally, microtubule inner protein (MIP) part of the dynein-decorated doublet microtubules (DMTs) in cilia axoneme, which is required for motile cilia beating. In Gallus gallus (Chicken), this protein is EF-hand domain-containing family member C2 (EFHC2).